Here is a 100-residue protein sequence, read N- to C-terminus: Large ribosomal subunit protein bL21 (100 aa).

It belongs to the bacterial ribosomal protein bL21 family. In terms of assembly, part of the 50S ribosomal subunit. Contacts protein L20.

Its function is as follows. This protein binds to 23S rRNA in the presence of protein L20. The sequence is that of Large ribosomal subunit protein bL21 from Corynebacterium jeikeium (strain K411).